Consider the following 277-residue polypeptide: Ribosomal RNA small subunit methyltransferase A (277 aa).

Residues Asn27, Leu29, Gly54, Glu75, Asp95, and Asn118 each contribute to the S-adenosyl-L-methionine site.

This sequence belongs to the class I-like SAM-binding methyltransferase superfamily. rRNA adenine N(6)-methyltransferase family. RsmA subfamily.

Its subcellular location is the cytoplasm. The catalysed reaction is adenosine(1518)/adenosine(1519) in 16S rRNA + 4 S-adenosyl-L-methionine = N(6)-dimethyladenosine(1518)/N(6)-dimethyladenosine(1519) in 16S rRNA + 4 S-adenosyl-L-homocysteine + 4 H(+). Its function is as follows. Specifically dimethylates two adjacent adenosines (A1518 and A1519) in the loop of a conserved hairpin near the 3'-end of 16S rRNA in the 30S particle. May play a critical role in biogenesis of 30S subunits. The sequence is that of Ribosomal RNA small subunit methyltransferase A from Chlamydia trachomatis serovar L2 (strain ATCC VR-902B / DSM 19102 / 434/Bu).